The sequence spans 619 residues: 1-deoxy-D-xylulose-5-phosphate synthase (619 aa).

Thiamine diphosphate contacts are provided by residues histidine 74 and 115 to 117; that span reads GHS. Aspartate 146 lines the Mg(2+) pocket. Residues 147–148, asparagine 175, tyrosine 285, and glutamate 365 each bind thiamine diphosphate; that span reads GA. Asparagine 175 provides a ligand contact to Mg(2+).

This sequence belongs to the transketolase family. DXPS subfamily. Homodimer. It depends on Mg(2+) as a cofactor. Thiamine diphosphate serves as cofactor.

The catalysed reaction is D-glyceraldehyde 3-phosphate + pyruvate + H(+) = 1-deoxy-D-xylulose 5-phosphate + CO2. The protein operates within metabolic intermediate biosynthesis; 1-deoxy-D-xylulose 5-phosphate biosynthesis; 1-deoxy-D-xylulose 5-phosphate from D-glyceraldehyde 3-phosphate and pyruvate: step 1/1. In terms of biological role, catalyzes the acyloin condensation reaction between C atoms 2 and 3 of pyruvate and glyceraldehyde 3-phosphate to yield 1-deoxy-D-xylulose-5-phosphate (DXP). This chain is 1-deoxy-D-xylulose-5-phosphate synthase, found in Clostridium perfringens (strain SM101 / Type A).